Consider the following 362-residue polypeptide: ATP synthase F(1) complex catalytic subunit beta, mitochondrial (362 aa).

K14 bears the N6-acetyllysine; alternate mark. An N6-succinyllysine; alternate modification is found at K14. The residue at position 51 (K51) is an N6-acetyllysine. V62, V63, G64, K65, T66, and V67 together coordinate ADP. Residue V62 participates in ATP binding. Phosphate-binding residues include V62, V63, G64, K65, and T66. Residues G64, K65, T66, and V67 each coordinate ATP. Position 66 (T66) interacts with Mg(2+). E91 is a binding site for Mg(2+). N6-acetyllysine; alternate occurs at positions 112 and 117. An N6-succinyllysine; alternate mark is found at K112 and K117. At T165 the chain carries Phosphothreonine. At K279 the chain carries N6-acetyllysine. Residue S286 is modified to Phosphoserine. N6-acetyllysine occurs at positions 333 and 338.

It belongs to the ATPase alpha/beta chains family. As to quaternary structure, homotrimer. Component of the ATP synthase complex composed at least of ATP5F1A/subunit alpha, ATP5F1B/subunit beta, ATP5MC1/subunit c (homooctomer), MT-ATP6/subunit a, MT-ATP8/subunit 8, ATP5ME/subunit e, ATP5MF/subunit f, ATP5MG/subunit g, ATP5MK/subunit k, ATP5MJ/subunit j, ATP5F1C/subunit gamma, ATP5F1D/subunit delta, ATP5F1E/subunit epsilon, ATP5PF/subunit F6, ATP5PB/subunit b, ATP5PD/subunit d, ATP5PO/subunit OSCP. ATP synthase complex consists of a soluble F(1) head domain (subunits alpha(3) and beta(3)) - the catalytic core - and a membrane F(0) domain - the membrane proton channel (subunits c, a, 8, e, f, g, k and j). These two domains are linked by a central stalk (subunits gamma, delta, and epsilon) rotating inside the F1 region and a stationary peripheral stalk (subunits F6, b, d, and OSCP). Interacts with PPIF. Interacts with BCL2L1 isoform BCL-X(L); the interaction mediates the association of BCL2L1 isoform BCL-X(L) with the mitochondrial membrane F(1)F(0) ATP synthase and enhances neurons metabolic efficiency. Interacts with CLN5 and PPT1. Interacts with S100A1; this interaction increases F1-ATPase activity. Interacts with MTLN. Interacts with TTC5/STRAP; the interaction results in decreased mitochondrial ATP production.

It localises to the mitochondrion inner membrane. It catalyses the reaction ATP + H2O + 4 H(+)(in) = ADP + phosphate + 5 H(+)(out). Functionally, catalytic subunit beta, of the mitochondrial membrane ATP synthase complex (F(1)F(0) ATP synthase or Complex V) that produces ATP from ADP in the presence of a proton gradient across the membrane which is generated by electron transport complexes of the respiratory chain. ATP synthase complex consist of a soluble F(1) head domain - the catalytic core - and a membrane F(1) domain - the membrane proton channel. These two domains are linked by a central stalk rotating inside the F(1) region and a stationary peripheral stalk. During catalysis, ATP synthesis in the catalytic domain of F(1) is coupled via a rotary mechanism of the central stalk subunits to proton translocation. In vivo, can only synthesize ATP although its ATP hydrolase activity can be activated artificially in vitro. With the subunit alpha (ATP5F1A), forms the catalytic core in the F(1) domain. The sequence is that of ATP synthase F(1) complex catalytic subunit beta, mitochondrial from Mesocricetus auratus (Golden hamster).